The chain runs to 843 residues: Taste receptor type 1 member 2 (843 aa).

The signal sequence occupies residues 1 to 19; that stretch reads MGPQARTLCLLSLLLHVLP. Residues 20–570 are Extracellular-facing; the sequence is KPGKLVENSD…TFLEWHEVPT (551 aa). Residues N87, N296, N316, N355, N372, N432, N484, N491, and N531 are each glycosylated (N-linked (GlcNAc...) asparagine). The chain crosses the membrane as a helical span at residues 571 to 591; sequence IVVAILAALGFFSTLAILFIF. Over 592-606 the chain is Cytoplasmic; the sequence is WRHFQTPMVRSAGGP. A helical membrane pass occupies residues 607–627; that stretch reads MCFLMLVPLLLAFGMVPVYVG. Residues 628–642 are Extracellular-facing; it reads PPTVFSCFCRQAFFT. The helical transmembrane segment at 643–663 threads the bilayer; sequence VCFSICLSCITVRSFQIVCVF. Residues 664-682 lie on the Cytoplasmic side of the membrane; that stretch reads KMARRLPSAYSFWMRYHGP. A helical membrane pass occupies residues 683–703; that stretch reads YVFVAFITAIKVALVVGNMLA. The Extracellular segment spans residues 704-731; that stretch reads TTINPIGRTDPDDPNIMILSCHPNYRNG. Residues 732-752 form a helical membrane-spanning segment; the sequence is LLFNTSMDLLLSVLGFSFAYM. The Cytoplasmic segment spans residues 753 to 764; that stretch reads GKELPTNYNEAK. A helical transmembrane segment spans residues 765–785; that stretch reads FITLSMTFSFTSSISLCTFMS. Residues 786–789 lie on the Extracellular side of the membrane; it reads VHDG. A helical membrane pass occupies residues 790 to 810; the sequence is VLVTIMDLLVTVLNFLAIGLG. The Cytoplasmic portion of the chain corresponds to 811–843; it reads YFGPKCYMILFYPERNTSAYFNSMIQGYTMRKS.

Belongs to the G-protein coupled receptor 3 family. TAS1R subfamily. As to quaternary structure, forms heterodimers with TAS1R3. Abundantly expressed in circumvallate and foliate papillae.

It is found in the cell membrane. Putative taste receptor. TAS1R2/TAS1R3 recognizes diverse natural and synthetic sweeteners. In Rattus norvegicus (Rat), this protein is Taste receptor type 1 member 2 (Tas1r2).